Reading from the N-terminus, the 55-residue chain is Large ribosomal subunit protein bL33 (55 aa).

The protein belongs to the bacterial ribosomal protein bL33 family.

The protein is Large ribosomal subunit protein bL33 of Buchnera aphidicola subsp. Baizongia pistaciae (strain Bp).